We begin with the raw amino-acid sequence, 172 residues long: Crossover junction endodeoxyribonuclease RuvC (172 aa).

Catalysis depends on residues aspartate 7, glutamate 67, and aspartate 140. Mg(2+) is bound by residues aspartate 7, glutamate 67, and aspartate 140.

Belongs to the RuvC family. In terms of assembly, homodimer which binds Holliday junction (HJ) DNA. The HJ becomes 2-fold symmetrical on binding to RuvC with unstacked arms; it has a different conformation from HJ DNA in complex with RuvA. In the full resolvosome a probable DNA-RuvA(4)-RuvB(12)-RuvC(2) complex forms which resolves the HJ. Mg(2+) serves as cofactor.

It is found in the cytoplasm. It catalyses the reaction Endonucleolytic cleavage at a junction such as a reciprocal single-stranded crossover between two homologous DNA duplexes (Holliday junction).. In terms of biological role, the RuvA-RuvB-RuvC complex processes Holliday junction (HJ) DNA during genetic recombination and DNA repair. Endonuclease that resolves HJ intermediates. Cleaves cruciform DNA by making single-stranded nicks across the HJ at symmetrical positions within the homologous arms, yielding a 5'-phosphate and a 3'-hydroxyl group; requires a central core of homology in the junction. The consensus cleavage sequence is 5'-(A/T)TT(C/G)-3'. Cleavage occurs on the 3'-side of the TT dinucleotide at the point of strand exchange. HJ branch migration catalyzed by RuvA-RuvB allows RuvC to scan DNA until it finds its consensus sequence, where it cleaves and resolves the cruciform DNA. The chain is Crossover junction endodeoxyribonuclease RuvC from Syntrophomonas wolfei subsp. wolfei (strain DSM 2245B / Goettingen).